Consider the following 248-residue polypeptide: Probable transcriptional regulatory protein MYPE8020 (248 aa).

The protein belongs to the TACO1 family.

It is found in the cytoplasm. In Malacoplasma penetrans (strain HF-2) (Mycoplasma penetrans), this protein is Probable transcriptional regulatory protein MYPE8020.